The following is a 281-amino-acid chain: Homoserine kinase (281 aa).

Residue 83 to 93 (PVSSGLGSSAA) coordinates ATP.

This sequence belongs to the GHMP kinase family. Homoserine kinase subfamily.

It localises to the cytoplasm. The enzyme catalyses L-homoserine + ATP = O-phospho-L-homoserine + ADP + H(+). The protein operates within amino-acid biosynthesis; L-threonine biosynthesis; L-threonine from L-aspartate: step 4/5. Its function is as follows. Catalyzes the ATP-dependent phosphorylation of L-homoserine to L-homoserine phosphate. This Thermotoga petrophila (strain ATCC BAA-488 / DSM 13995 / JCM 10881 / RKU-1) protein is Homoserine kinase.